Reading from the N-terminus, the 312-residue chain is Taste receptor type 2 member 9 (312 aa).

Over 1–9 (MPSAIEAIY) the chain is Extracellular. The helical transmembrane segment at 10–32 (IILIAGELTIGIWGNGFIVLVNC) threads the bilayer. Topologically, residues 33–52 (XDWLKRRDISLIDIILISLA) are cytoplasmic. The chain crosses the membrane as a helical span at residues 53-72 (ISRICLLCVISLDGFFMLLF). Residues 73 to 86 (PGTYGNSVLVSIVN) are Extracellular-facing. Residues 87-109 (VVWTFANNSSLWFTSCLSIFYLL) form a helical membrane-spanning segment. Residues 110-128 (KIANISHPFFFWLKLKINK) lie on the Cytoplasmic side of the membrane. A helical transmembrane segment spans residues 129-146 (VMLAILLGSFLISLIISV). Over 147-180 (XKNDDMWYHLFKVSXEENITWEFKVSKIPGTFKQ) the chain is Extracellular. The N-linked (GlcNAc...) asparagine glycan is linked to N164. A helical transmembrane segment spans residues 181–203 (LTLNLGGRVPFILCLISFFLLLF). The Cytoplasmic segment spans residues 204–234 (SLVRHTKQIQLHATGFRDPSTEAHMRAIKAV). Residues 235–257 (IIFLLLLIVYYPVFLVMTSSALI) traverse the membrane as a helical segment. Residues 258-261 (PQGK) lie on the Extracellular side of the membrane. A helical membrane pass occupies residues 262–284 (LVLMIGDIVTVIFPSSHSFILIM). The Cytoplasmic portion of the chain corresponds to 285–312 (GNSKLREAFLKMLRFVKGFLRRRKPFVP).

Belongs to the G-protein coupled receptor T2R family.

Its subcellular location is the membrane. Gustducin-coupled receptor implicated in the perception of bitter compounds in the oral cavity and the gastrointestinal tract. Signals through PLCB2 and the calcium-regulated cation channel TRPM5. The protein is Taste receptor type 2 member 9 (TAS2R9) of Pan troglodytes (Chimpanzee).